A 323-amino-acid polypeptide reads, in one-letter code: MSKNHQKVVLVGDGQVGSAYAYALVQQGLAEELAIVNLSKEQAEGDALDLEDATVFTAPKQVYQADHHACADADLVVICAGAAQKPGETRLDLVGKNLEIMKQITKSIMATGFDGILLLATNPVDVLTYAVQKISGLPASRVISSGTSLDSARLRIALAKKLGVSPLDISANVMAEHGDSEFAAYSSATVGGKPLLQICEEQGISNDELLKIEDDVRHKAYEIINRKGFTAYGVATCLMRITRAILRDENAVLPVGAYIDGEYGIKDNYLGTPAVINASGISKVIEVPLNERESEAMTKSAEALKKIATDGMTKVGLVNYLIK.

NAD(+) is bound by residues valine 16, asparagine 37, and 81–82 (GA). Substrate contacts are provided by residues glutamine 84, arginine 90, and 122-125 (NPVD). Residues 120-122 (ATN) and serine 145 each bind NAD(+). 150 to 153 (DSAR) is a substrate binding site. Histidine 177 acts as the Proton acceptor in catalysis. Position 221 is a phosphotyrosine (tyrosine 221). Threonine 230 provides a ligand contact to substrate.

It belongs to the LDH/MDH superfamily. LDH family. Homotetramer.

The protein localises to the cytoplasm. The catalysed reaction is (S)-lactate + NAD(+) = pyruvate + NADH + H(+). It participates in fermentation; pyruvate fermentation to lactate; (S)-lactate from pyruvate: step 1/1. Its function is as follows. Catalyzes the conversion of lactate to pyruvate. This chain is L-lactate dehydrogenase, found in Limosilactobacillus reuteri (Lactobacillus reuteri).